A 159-amino-acid polypeptide reads, in one-letter code: Ribosomal RNA large subunit methyltransferase H (159 aa).

Residues L76, G108, and 127–132 (FGRLTL) contribute to the S-adenosyl-L-methionine site.

It belongs to the RNA methyltransferase RlmH family. In terms of assembly, homodimer.

It localises to the cytoplasm. The enzyme catalyses pseudouridine(1915) in 23S rRNA + S-adenosyl-L-methionine = N(3)-methylpseudouridine(1915) in 23S rRNA + S-adenosyl-L-homocysteine + H(+). In terms of biological role, specifically methylates the pseudouridine at position 1915 (m3Psi1915) in 23S rRNA. The polypeptide is Ribosomal RNA large subunit methyltransferase H (Listeria monocytogenes serotype 4a (strain HCC23)).